The following is a 411-amino-acid chain: Transforming growth factor beta regulator 1 (411 aa).

Disordered regions lie at residues 1–29 (MSLLDGLASSPRAPLQSSKARMKKLPKKS) and 119–146 (GPISGPSTGAEEPFGKKTKKEKKEKGKE). Ser-2 carries the post-translational modification N-acetylserine. A Phosphoserine modification is found at Ser-10. Residues 182–241 (VFPIGLGGLTVYSLGEIITDRPGFHDESAIYPVGYCSTRIYASMKCPDQKCLYTCQIKDG) form the FYR N-terminal domain. Residues 242 to 321 (GVQPQFEIVP…RKCINYQWVK (80 aa)) enclose the FYR C-terminal domain.

This sequence belongs to the TBRG1 family. As to quaternary structure, interacts with CDKN2A and MDM2. In terms of processing, ubiquitinated; mediated by MDM2 and leading to its subsequent proteasomal degradation. As to expression, widely expressed at low levels in most tissues, with highest levels in pancreas, lung and liver. Expression is decreased in primary tumors including lung, liver, breast, pancreas and kidney carcinomas, chronic lymphocytic leukemia and diffuse large B-cell lymphoma.

Its subcellular location is the nucleus. Acts as a growth inhibitor. Can activate p53/TP53, causes G1 arrest and collaborates with CDKN2A to restrict proliferation, but does not require either protein to inhibit DNA synthesis. Redistributes CDKN2A into the nucleoplasm. Involved in maintaining chromosomal stability. The polypeptide is Transforming growth factor beta regulator 1 (TBRG1) (Homo sapiens (Human)).